The sequence spans 311 residues: MANPLYQKHIISINDLSRDDLNLVLATAAKLKAHPQPELLKHKVIASCFFEASTRTRLSFETSMHRLGASVVGFSDSANTSLGKKGETLADTISVISTYVDAIVMRHPQEGAARLATEFSGKVPVLNAGDGSNQHPTQTLLDLFTIQETQGRLDNLHIAMVGDLKYGRTVHSLTQALAKFSGNRFYFIAPEALAMPQYILDMLDEKGMDWSLHGSIEEVMAEVDILYMTRVQKERLDPSEYANVKAQFVLRASDLNGARENMKVLHPLPRIDEITTDVDKTPHAWYFQQAGNGIFARQALLALVLNSELSL.

The carbamoyl phosphate site is built by Arg-55 and Thr-56. Lys-85 is a binding site for L-aspartate. Arg-106, His-135, and Gln-138 together coordinate carbamoyl phosphate. Residues Arg-168 and Arg-230 each coordinate L-aspartate. Residues Leu-268 and Pro-269 each coordinate carbamoyl phosphate.

This sequence belongs to the aspartate/ornithine carbamoyltransferase superfamily. ATCase family. In terms of assembly, heterododecamer (2C3:3R2) of six catalytic PyrB chains organized as two trimers (C3), and six regulatory PyrI chains organized as three dimers (R2).

The catalysed reaction is carbamoyl phosphate + L-aspartate = N-carbamoyl-L-aspartate + phosphate + H(+). It functions in the pathway pyrimidine metabolism; UMP biosynthesis via de novo pathway; (S)-dihydroorotate from bicarbonate: step 2/3. Functionally, catalyzes the condensation of carbamoyl phosphate and aspartate to form carbamoyl aspartate and inorganic phosphate, the committed step in the de novo pyrimidine nucleotide biosynthesis pathway. This chain is Aspartate carbamoyltransferase catalytic subunit, found in Salmonella arizonae (strain ATCC BAA-731 / CDC346-86 / RSK2980).